We begin with the raw amino-acid sequence, 389 residues long: MPLENLEEEGLPKNPDLRIAQLRFLLSLPEHRGDAAVREELMAAVRENNMAPYYEALCKSLDWQMDVDLLSKMKKANEEELKRLDEELEDAEKNLGESEIRDAMMAKAEYLCQIGDKEGALTAFRKTYDKTVALGHRLDIVFYLLRIGLFYMDNDLITRNTEKAKSLIEEGGDWDRRNRLKVYQGLYCVAIRDFKQAAELFLDTVSTFTSYELMDYKTFVTYTVYVSMIALERPDLREKVIKGAEILEVLHSLPAVRQYLFSLYECRYSVFFQSLAIVEQEMKKDWLFAPHYRYYVREMRIHAYSQLLESYRSLTLGYMAEAFGVGVDFIDQELSRFIAAGRLHCKIDKVNEIVETNRPDSKNWQYQETIKKGDLLLNRVQKLSRVINM.

Positions 193–361 (DFKQAAELFL…EIVETNRPDS (169 aa)) constitute a PCI domain.

Belongs to the proteasome subunit S10 family. Component of the 19S proteasome regulatory particle complex. The 26S proteasome consists of a 20S core particle (CP) and two 19S regulatory subunits (RP). The regulatory particle is made of a lid composed of 9 subunits including PSMD6, a base containing 6 ATPases and few additional components.

Functionally, component of the 26S proteasome, a multiprotein complex involved in the ATP-dependent degradation of ubiquitinated proteins. This complex plays a key role in the maintenance of protein homeostasis by removing misfolded or damaged proteins, which could impair cellular functions, and by removing proteins whose functions are no longer required. Therefore, the proteasome participates in numerous cellular processes, including cell cycle progression, apoptosis, or DNA damage repair. This is 26S proteasome non-ATPase regulatory subunit 6 (Psmd6) from Mus musculus (Mouse).